A 377-amino-acid polypeptide reads, in one-letter code: L-arabinitol 4-dehydrogenase (377 aa).

Zn(2+) is bound by residues Cys-66, His-91, Glu-92, Cys-121, Cys-124, Cys-127, Cys-135, and Glu-176. Residues 203 to 204, Asp-224, Arg-229, Ile-296, and 320 to 322 contribute to the NAD(+) site; these read PI and QYR.

This sequence belongs to the zinc-containing alcohol dehydrogenase family. Homotetramer. It depends on Zn(2+) as a cofactor. The N-terminus is blocked.

It catalyses the reaction L-arabinitol + NAD(+) = L-xylulose + NADH + H(+). It participates in carbohydrate degradation; L-arabinose degradation via L-arabinitol; D-xylulose 5-phosphate from L-arabinose (fungal route): step 2/5. In terms of biological role, catalyzes the NAD-dependent oxidation of L-arabinitol to L-xylulose in the fungal L-arabinose catabolic pathway. L-arabinose catabolism is important for using plant material as a carbon source. Can partially compensate for xylitol dehydrogenase in xdh1 mutants. Also oxidizes galactitol to L-xylo-3-hexulose as an alternative to the standard Leloir pathway for D-galactose metabolism. NADP cannot act as a cosubstrate. This is L-arabinitol 4-dehydrogenase (lad1) from Hypocrea jecorina (Trichoderma reesei).